An 82-amino-acid chain; its full sequence is Small ribosomal subunit protein bS16 (82 aa).

This sequence belongs to the bacterial ribosomal protein bS16 family.

This chain is Small ribosomal subunit protein bS16, found in Histophilus somni (strain 2336) (Haemophilus somnus).